The chain runs to 181 residues: NADH-quinone oxidoreductase subunit 2 (181 aa).

[2Fe-2S] cluster is bound by residues Cys83, Ser87, Cys88, Cys124, and Cys128. The cysteines at positions 144 and 172 are disulfide-linked.

The protein belongs to the complex I 24 kDa subunit family. As to quaternary structure, NDH-1 is composed of 15 different subunits, Nqo1 to Nqo15. The complex has a L-shaped structure, with the hydrophobic arm (subunits Nqo7, Nqo8 and Nqo10 to Nqo14) embedded in the membrane and the hydrophilic peripheral arm (subunits Nqo1 to Nqo6, Nqo9 and Nqo15) protruding into the bacterial cytoplasm. The hydrophilic domain contains all the redox centers. Requires [2Fe-2S] cluster as cofactor.

It is found in the cell membrane. The enzyme catalyses a quinone + NADH + 5 H(+)(in) = a quinol + NAD(+) + 4 H(+)(out). In terms of biological role, NDH-1 shuttles electrons from NADH, via FMN and iron-sulfur (Fe-S) centers, to quinones in the respiratory chain. The immediate electron acceptor for the enzyme in this species is menaquinone. Couples the redox reaction to proton translocation (for every two electrons transferred, four hydrogen ions are translocated across the cytoplasmic membrane), and thus conserves the redox energy in a proton gradient required for the synthesis of ATP. The polypeptide is NADH-quinone oxidoreductase subunit 2 (nqo2) (Thermus thermophilus (strain ATCC 27634 / DSM 579 / HB8)).